Consider the following 91-residue polypeptide: Acylphosphatase (91 aa).

Residues 4–91 (RAMVTVKGMV…GEFDDFHIAY (88 aa)) form the Acylphosphatase-like domain. Residues R19 and N37 contribute to the active site.

The protein belongs to the acylphosphatase family.

The enzyme catalyses an acyl phosphate + H2O = a carboxylate + phosphate + H(+). The protein is Acylphosphatase (acyP) of Geotalea uraniireducens (strain Rf4) (Geobacter uraniireducens).